Here is a 465-residue protein sequence, read N- to C-terminus: Pancreatic triacylglycerol lipase (465 aa).

Positions 1-16 are cleaved as a signal peptide; it reads MLLVWSLALLLGAVAG. 2 cysteine pairs are disulfide-bonded: cysteine 20–cysteine 26 and cysteine 107–cysteine 118. Serine 169 serves as the catalytic Nucleophile. Aspartate 193 (charge relay system) is an active-site residue. Glutamate 204, arginine 207, aspartate 209, and aspartate 212 together coordinate Ca(2+). An intrachain disulfide couples cysteine 254 to cysteine 278. Histidine 280 serves as the catalytic Charge relay system. Cystine bridges form between cysteine 302-cysteine 313, cysteine 316-cysteine 321, and cysteine 449-cysteine 465. The 111-residue stretch at 355 to 465 folds into the PLAT domain; that stretch reads WRYKVSVTLS…EDVLLTLNAC (111 aa).

This sequence belongs to the AB hydrolase superfamily. Lipase family. As to quaternary structure, forms a 1:1 stoichiometric complex with (pro)colipase/CLPS. In terms of tissue distribution, expressed in many tissues with highest expression in liver. During hibernation there is a significant increases in expression in heart, white adipose tissue (WAT), and testis; but not in pancreas.

The protein resides in the secreted. It catalyses the reaction a triacylglycerol + H2O = a diacylglycerol + a fatty acid + H(+). The enzyme catalyses 1,2,3-tributanoylglycerol + H2O = dibutanoylglycerol + butanoate + H(+). It carries out the reaction 1,2,3-tri-(9Z-octadecenoyl)-glycerol + H2O = di-(9Z)-octadecenoylglycerol + (9Z)-octadecenoate + H(+). The catalysed reaction is all-trans-retinyl hexadecanoate + H2O = all-trans-retinol + hexadecanoate + H(+). It catalyses the reaction 1,2-di-(9Z-octadecenoyl)-glycerol + H2O = (9Z-octadecenoyl)-glycerol + (9Z)-octadecenoate + H(+). Inhibited by bile salts, is reactivated by (pro)colipase/CLPS. Plays an important role in fat metabolism. It preferentially splits the esters of long-chain fatty acids at positions 1 and 3, producing mainly 2-monoacylglycerol and free fatty acids, and shows considerably higher activity against insoluble emulsified substrates than against soluble ones. Plays a role in hibernation as a key enzyme that shows high activity at low temperatures. When expressed in the hibernating heart it liberates fatty acids from triglycerides at temperatures as low as 0 degrees Celsius. This Ictidomys tridecemlineatus (Thirteen-lined ground squirrel) protein is Pancreatic triacylglycerol lipase (PNLIP).